The following is a 255-amino-acid chain: Phosphatidylcholine synthase (255 aa).

Over 1–13 the chain is Cytoplasmic; that stretch reads MNPIKPPFTLNQY. A helical transmembrane segment spans residues 14 to 34; that stretch reads FAAWFVHVFTASAACIGVFSL. The Periplasmic segment spans residues 35-42; sequence YKIYQHDY. The helical transmembrane segment at 43-63 threads the bilayer; it reads VFALWLMAITVFIDAVDGSLA. At 64–76 the chain is on the cytoplasmic side; that stretch reads RLVHVKSVLPKID. Residues 77 to 97 traverse the membrane as a helical segment; that stretch reads GALLDNIVDYLNYVITPCFFL. At 98–103 the chain is on the periplasmic side; sequence LVKPGM. The chain crosses the membrane as a helical span at residues 104-124; the sequence is LPADYVVPITAAITITSAYQF. Topologically, residues 125–133 are cytoplasmic; sequence CQDDAKTPD. The chain crosses the membrane as a helical span at residues 134–154; the sequence is HFFKGFPCYWNITVFYMYIFN. A topological domain (periplasmic) is located at residue threonine 155. Residues 156-175 form a helical membrane-spanning segment; it reads SMIVNTVLLSLFCVLIFIPV. The Cytoplasmic segment spans residues 176–190; it reads KYVYPSRLDYLTESR. Residues 191–211 form a helical membrane-spanning segment; the sequence is VLKILMHCCSALYGISSFCLL. Over 212–217 the chain is Periplasmic; the sequence is VNYPET. Residues 218-238 traverse the membrane as a helical segment; that stretch reads NKLWVSLSLGYVGMYLFLSFY. Topologically, residues 239 to 255 are cytoplasmic; the sequence is RTYYPMFKAKITANNKD.

This sequence belongs to the CDP-alcohol phosphatidyltransferase class-I family. The cofactor is Mn(2+).

It is found in the cell inner membrane. It catalyses the reaction a CDP-1,2-diacyl-sn-glycerol + choline = a 1,2-diacyl-sn-glycero-3-phosphocholine + CMP + H(+). Condenses choline with CDP-diglyceride to produce phosphatidylcholine and CMP. Affects virulence of this bacterium when there is a complete loss of phosphatidylcholine formation due to absence of both the synthase (pcs) and the methylation (pmtA) pathways. Reduced virulence results from lowered yields of bacteria within host macrophages and because of loss of high multiplicity cytotoxicity. The sequence is that of Phosphatidylcholine synthase from Legionella pneumophila subsp. pneumophila (strain Philadelphia 1 / ATCC 33152 / DSM 7513).